The sequence spans 451 residues: tRNA modification GTPase MnmE (451 aa).

(6S)-5-formyl-5,6,7,8-tetrahydrofolate is bound by residues R23, E80, and K119. Residues G215–G372 form the TrmE-type G domain. N225 contributes to the K(+) binding site. Residues N225–S230, T244–T250, and D269–G272 each bind GTP. A Mg(2+)-binding site is contributed by S229. The K(+) site is built by T244, I246, and T249. T250 contacts Mg(2+). Position 451 (K451) interacts with (6S)-5-formyl-5,6,7,8-tetrahydrofolate.

This sequence belongs to the TRAFAC class TrmE-Era-EngA-EngB-Septin-like GTPase superfamily. TrmE GTPase family. Homodimer. Heterotetramer of two MnmE and two MnmG subunits. K(+) is required as a cofactor.

Its subcellular location is the cytoplasm. In terms of biological role, exhibits a very high intrinsic GTPase hydrolysis rate. Involved in the addition of a carboxymethylaminomethyl (cmnm) group at the wobble position (U34) of certain tRNAs, forming tRNA-cmnm(5)s(2)U34. In Nitrosomonas europaea (strain ATCC 19718 / CIP 103999 / KCTC 2705 / NBRC 14298), this protein is tRNA modification GTPase MnmE.